A 110-amino-acid chain; its full sequence is Small ribosomal subunit protein bS16 (110 aa).

The span at 81 to 104 shows a compositional bias: basic and acidic residues; the sequence is VRPAEVLGKQKQEKERSAKKKDAA. The disordered stretch occupies residues 81–110; sequence VRPAEVLGKQKQEKERSAKKKDAAASETSE.

It belongs to the bacterial ribosomal protein bS16 family.

The protein is Small ribosomal subunit protein bS16 of Prochlorococcus marinus (strain NATL2A).